We begin with the raw amino-acid sequence, 256 residues long: Peptidyl-prolyl cis-trans isomerase FKBP19, chloroplastic (256 aa).

Residues 1 to 29 (MASISSFGCFPQSTALAGTSSTTRCRTTV) constitute a chloroplast transit peptide. The N-terminal 59 residues, 30-88 (AARLADQSDDFAPLRSSGGNCGCVNNSGEFDRRKLLVSSVGLLIGALSYDSKDGDFASA), are a transit peptide targeting the thylakoid. The PPIase FKBP-type domain occupies 135–254 (GDKVVVDWDG…LFDVELLKIV (120 aa)). Phosphoserine is present on Ser164.

Belongs to the FKBP-type PPIase family.

It is found in the plastid. The protein localises to the chloroplast thylakoid lumen. The enzyme catalyses [protein]-peptidylproline (omega=180) = [protein]-peptidylproline (omega=0). Its function is as follows. PPIases accelerate the folding of proteins. It catalyzes the cis-trans isomerization of proline imidic peptide bonds in oligopeptides. The chain is Peptidyl-prolyl cis-trans isomerase FKBP19, chloroplastic (FKBP19) from Arabidopsis thaliana (Mouse-ear cress).